The primary structure comprises 1598 residues: Serine/threonine-protein kinase Nek1 (1598 aa).

One can recognise a Protein kinase domain in the interval 106 to 380 (YEVIRQIGAG…ALQCLGYTIF (275 aa)). Residues 112-120 (IGAGRFGEV) and Lys135 each bind ATP. Catalysis depends on Asp240, which acts as the Proton acceptor.

Belongs to the protein kinase superfamily. NEK Ser/Thr protein kinase family. NIMA subfamily.

Its subcellular location is the cytoplasm. The protein localises to the cytoskeleton. It localises to the microtubule organizing center. It is found in the centrosome. The protein resides in the spindle pole. The enzyme catalyses L-seryl-[protein] + ATP = O-phospho-L-seryl-[protein] + ADP + H(+). It carries out the reaction L-threonyl-[protein] + ATP = O-phospho-L-threonyl-[protein] + ADP + H(+). Phosphorylation status of the T-loop (amino acids 267-293) modulates kinase activity and subcellular localization of the protein. In terms of biological role, probable serine/threonine-protein kinase. Involved in controlling centrosome splitting. Promotes separation of the centrosome outer cores. This Toxoplasma gondii (strain ATCC 50611 / Me49) protein is Serine/threonine-protein kinase Nek1.